Reading from the N-terminus, the 196-residue chain is Imidazoleglycerol-phosphate dehydratase (196 aa).

This sequence belongs to the imidazoleglycerol-phosphate dehydratase family.

The protein localises to the cytoplasm. It carries out the reaction D-erythro-1-(imidazol-4-yl)glycerol 3-phosphate = 3-(imidazol-4-yl)-2-oxopropyl phosphate + H2O. Its pathway is amino-acid biosynthesis; L-histidine biosynthesis; L-histidine from 5-phospho-alpha-D-ribose 1-diphosphate: step 6/9. The sequence is that of Imidazoleglycerol-phosphate dehydratase from Oleidesulfovibrio alaskensis (strain ATCC BAA-1058 / DSM 17464 / G20) (Desulfovibrio alaskensis).